Consider the following 556-residue polypeptide: MLTDIQIAQSCKMKPITQVAAELGIDEEELELYGKYKAKLSDKLWERVKDRPDGKLVLVTAINPTPAGEGKTTTTVGLGQAMARIGKKAVIALREPSLGPVMGIKGGAAGGGYSQVVPMEDINLHFTGDMHAITAANNLLSAAIDNHIQQGNELNIDVRQIIWKRAMDMNDRALRNIVVGLGGKANGVPREDGFQITVASEVMAVLCLSTGLMDLKERLGRILIGYTYDGKPVFAKDLKVNGAMALLLKDAIKPNLVQTLENTPAIVHGGPFANIAHGCNSIVATRLGLKLADYCITEAGFGADLGAEKFFNIKCRYAGLKPDLVVLVATIRALKYNGGVKKENLGIENLPALEKGFVNLEKHIENIRKFQVPLLVAINHFDTDSEAEIEYVKNRCKALNVEVAFSDVFSKGSEGGIELAEKVVKLTETQKSNFKPLYDVNLSIREKIEIIAREIYGADSVNILPAAERAIKKIEELKMDKLPICVAKTQYSLSDDPTLLGRPQGFVITVREIKLSSGAGFIVAITGDIMTMPGLPKVPAAEKIDIDENGVITGLF.

Residue 65-72 (TPAGEGKT) participates in ATP binding.

This sequence belongs to the formate--tetrahydrofolate ligase family.

It catalyses the reaction (6S)-5,6,7,8-tetrahydrofolate + formate + ATP = (6R)-10-formyltetrahydrofolate + ADP + phosphate. It functions in the pathway one-carbon metabolism; tetrahydrofolate interconversion. The polypeptide is Formate--tetrahydrofolate ligase (Acetivibrio thermocellus (strain ATCC 27405 / DSM 1237 / JCM 9322 / NBRC 103400 / NCIMB 10682 / NRRL B-4536 / VPI 7372) (Clostridium thermocellum)).